The chain runs to 347 residues: Quinolinate synthase (347 aa).

Residues His-47 and Ser-68 each contribute to the iminosuccinate site. Cys-113 provides a ligand contact to [4Fe-4S] cluster. Iminosuccinate contacts are provided by residues 139–141 (YAN) and Ser-156. Cys-200 is a binding site for [4Fe-4S] cluster. Iminosuccinate is bound by residues 226–228 (HPE) and Thr-243. A [4Fe-4S] cluster-binding site is contributed by Cys-297.

Belongs to the quinolinate synthase family. Type 1 subfamily. Requires [4Fe-4S] cluster as cofactor.

It is found in the cytoplasm. The enzyme catalyses iminosuccinate + dihydroxyacetone phosphate = quinolinate + phosphate + 2 H2O + H(+). The protein operates within cofactor biosynthesis; NAD(+) biosynthesis; quinolinate from iminoaspartate: step 1/1. In terms of biological role, catalyzes the condensation of iminoaspartate with dihydroxyacetone phosphate to form quinolinate. This chain is Quinolinate synthase, found in Shigella boydii serotype 18 (strain CDC 3083-94 / BS512).